Here is a 990-residue protein sequence, read N- to C-terminus: Presequence protease, mitochondrial (990 aa).

Residues 1 to 56 (MLRFQRTVPRVAIRRLANVYSEGAVLHGYKVRRAQEIPEMRMAAVELEHEMTGARH) constitute a mitochondrion transit peptide. Residue histidine 84 coordinates Zn(2+). The Proton acceptor role is filled by glutamate 87. Residue histidine 88 coordinates Zn(2+). Glutamate 160 is a catalytic residue. A Zn(2+)-binding site is contributed by glutamate 185.

Belongs to the peptidase M16 family. PreP subfamily. In terms of assembly, monomer and homodimer; homodimerization is induced by binding of the substrate. Zn(2+) is required as a cofactor.

The protein resides in the mitochondrion intermembrane space. The protein localises to the mitochondrion matrix. Degrades mitochondrial transit peptides after their cleavage in the intermembrane space or in the matrix, and presequence peptides; clearance of these peptides is required to keep the presequence processing machinery running. Preferentially cleaves the N-terminal side of paired basic amino acid residues. Also degrades other unstructured peptides. May function as an ATP-dependent peptidase as opposed to a metalloendopeptidase. The chain is Presequence protease, mitochondrial (CYM1) from Eremothecium gossypii (strain ATCC 10895 / CBS 109.51 / FGSC 9923 / NRRL Y-1056) (Yeast).